A 364-amino-acid polypeptide reads, in one-letter code: DNA replication and repair protein RecF (364 aa).

30–37 (GNNAQGKT) is a binding site for ATP.

This sequence belongs to the RecF family.

Its subcellular location is the cytoplasm. Its function is as follows. The RecF protein is involved in DNA metabolism; it is required for DNA replication and normal SOS inducibility. RecF binds preferentially to single-stranded, linear DNA. It also seems to bind ATP. The polypeptide is DNA replication and repair protein RecF (Clostridium botulinum (strain Loch Maree / Type A3)).